The primary structure comprises 184 residues: Non-specific lipid transfer protein GPI-anchored 6 (184 aa).

An N-terminal signal peptide occupies residues 1 to 24 (MEKSTRTLFITIVITSMLLGFGNS). 4 cysteine pairs are disulfide-bonded: Cys-33/Cys-74, Cys-43/Cys-58, Cys-59/Cys-101, and Cys-72/Cys-111. The tract at residues 138-158 (NSTSPTQIHKDGTGGGKAEPV) is disordered. Ser-160 carries GPI-anchor amidated serine lipidation. A propeptide spans 161-184 (NGWKEKSWLGVELLIYLLVSLIFF) (removed in mature form).

Belongs to the plant LTP family. As to expression, preferentially expressed in the shoot apical meristem and the root meristem. Also present in the ovules and developing embryos. Observed in cotyledons, hypocotyls, flowers, leaves and siliques. Up-regulated in the epidermis of stems.

It localises to the cell membrane. Functionally, lipid transfer protein involved in seed and ovule maturation and development, probably by regulating the fatty acids homeostasis during suberin and sporopollenin biosynthesis or deposition. Contributes to pre-invasive defense against some non-host powdery mildew pathogens by preventing the penetration of the epidermal cell wall by the fungal agents (e.g. Blumeria graminis f. sp. hordei (Bgh)). This chain is Non-specific lipid transfer protein GPI-anchored 6, found in Arabidopsis thaliana (Mouse-ear cress).